The sequence spans 205 residues: Putative 3-methyladenine DNA glycosylase (205 aa).

It belongs to the DNA glycosylase MPG family.

The polypeptide is Putative 3-methyladenine DNA glycosylase (Clostridium perfringens (strain SM101 / Type A)).